The chain runs to 79 residues: Putative membrane protein insertion efficiency factor (79 aa).

Belongs to the UPF0161 family.

The protein resides in the cell inner membrane. Functionally, could be involved in insertion of integral membrane proteins into the membrane. The chain is Putative membrane protein insertion efficiency factor from Thermotoga neapolitana (strain ATCC 49049 / DSM 4359 / NBRC 107923 / NS-E).